The sequence spans 658 residues: Integrator complex subunit 9 (658 aa).

Positions 550–574 (KHVLQLPPKPPQPPTSKKRKRVSDD) are disordered. A Nuclear localization signal motif is present at residues 566–570 (KKRKR).

The protein belongs to the metallo-beta-lactamase superfamily. RNA-metabolizing metallo-beta-lactamase-like family. INTS9 subfamily. In terms of assembly, component of the Integrator complex, composed of core subunits INTS1, INTS2, INTS3, INTS4, INTS5, INTS6, INTS7, INTS8, INTS9/RC74, INTS10, INTS11/CPSF3L, INTS12, INTS13, INTS14 and INTS15. The core complex associates with protein phosphatase 2A subunits PPP2CA and PPP2R1A, to form the Integrator-PP2A (INTAC) complex. INTS9 is part of the RNA endonuclease subcomplex, composed of INTS4, INTS9, INTS11 and inositol hexakisphosphate (InsP6).

It localises to the nucleus. The protein localises to the cytoplasm. Component of the integrator complex, a multiprotein complex that terminates RNA polymerase II (Pol II) transcription in the promoter-proximal region of genes. The integrator complex provides a quality checkpoint during transcription elongation by driving premature transcription termination of transcripts that are unfavorably configured for transcriptional elongation: the complex terminates transcription by (1) catalyzing dephosphorylation of the C-terminal domain (CTD) of Pol II subunit POLR2A/RPB1 and SUPT5H/SPT5, (2) degrading the exiting nascent RNA transcript via endonuclease activity and (3) promoting the release of Pol II from bound DNA. The integrator complex is also involved in terminating the synthesis of non-coding Pol II transcripts, such as enhancer RNAs (eRNAs), small nuclear RNAs (snRNAs), telomerase RNAs and long non-coding RNAs (lncRNAs). This chain is Integrator complex subunit 9 (INTS9), found in Gallus gallus (Chicken).